The sequence spans 636 residues: Zinc finger protein 90 (636 aa).

A KRAB domain is found at 14-85 (VTFKDVAVNF…EKEIQRPFCP (72 aa)). 7 consecutive C2H2-type zinc fingers follow at residues 208 to 230 (YKCD…EKIH), 250 to 272 (HECA…QRIH), 278 to 300 (FECN…ENAH), 306 to 328 (YQCS…QRIH), 334 to 356 (YRCN…EVTH), 362 to 384 (FQCK…ERTH), and 390 to 412 (FECS…MRIH). The tract at residues 227–247 (EKIHKGDPYSNGTDQGAQSGR) is disordered. A Glycyl lysine isopeptide (Lys-Gly) (interchain with G-Cter in SUMO2) cross-link involves residue Lys-444. 6 consecutive C2H2-type zinc fingers follow at residues 446-468 (YHCN…QRLH), 494-516 (YQCN…HRIH), 522-544 (YECN…ERTH), 550-572 (YECI…ERTH), 578-600 (YECN…QRTH), and 606-628 (YACK…HRVH).

Belongs to the krueppel C2H2-type zinc-finger protein family. In terms of assembly, interacts (via N- and C-termini) with REST (via zinc-finger DNA-binding domain); the interaction inhibits REST repressor activity. As to expression, brain, spleen, thymus, and testis. Expressed in heart.

It localises to the nucleus. Functionally, inhibits the transcriptional repressor activity of REST by inhibiting its binding to DNA, thereby derepressing transcription of REST target genes. This Mus musculus (Mouse) protein is Zinc finger protein 90 (Zfp90).